A 336-amino-acid chain; its full sequence is HTH-type transcriptional regulator SyrM (336 aa).

An HTH lysR-type domain is found at 41–98 (IDLNLLVALEALLEYRNVTHAGQHIGRSQPAMSRALGRLRGLFNDDLLVRSSTGLIPT). Positions 58 to 77 (VTHAGQHIGRSQPAMSRALG) form a DNA-binding region, H-T-H motif.

This sequence belongs to the LysR transcriptional regulatory family.

Functionally, acts in trans to stimulate nod gene expression via nodD3 and exo gene expression via SyrA. The sequence is that of HTH-type transcriptional regulator SyrM (syrM) from Rhizobium etli.